The primary structure comprises 434 residues: Serine hydroxymethyltransferase (434 aa).

Residues Leu-128 and 132–134 each bind (6S)-5,6,7,8-tetrahydrofolate; that span reads GHL. An N6-(pyridoxal phosphate)lysine modification is found at Lys-237.

It belongs to the SHMT family. In terms of assembly, homodimer. Requires pyridoxal 5'-phosphate as cofactor.

Its subcellular location is the cytoplasm. The catalysed reaction is (6R)-5,10-methylene-5,6,7,8-tetrahydrofolate + glycine + H2O = (6S)-5,6,7,8-tetrahydrofolate + L-serine. Its pathway is one-carbon metabolism; tetrahydrofolate interconversion. It participates in amino-acid biosynthesis; glycine biosynthesis; glycine from L-serine: step 1/1. Functionally, catalyzes the reversible interconversion of serine and glycine with tetrahydrofolate (THF) serving as the one-carbon carrier. This reaction serves as the major source of one-carbon groups required for the biosynthesis of purines, thymidylate, methionine, and other important biomolecules. Also exhibits THF-independent aldolase activity toward beta-hydroxyamino acids, producing glycine and aldehydes, via a retro-aldol mechanism. The polypeptide is Serine hydroxymethyltransferase (Corynebacterium efficiens (strain DSM 44549 / YS-314 / AJ 12310 / JCM 11189 / NBRC 100395)).